The chain runs to 307 residues: Pantothenate kinase (307 aa).

ATP is bound at residue 87–94; sequence GSVAVGKS.

Belongs to the prokaryotic pantothenate kinase family.

It is found in the cytoplasm. The enzyme catalyses (R)-pantothenate + ATP = (R)-4'-phosphopantothenate + ADP + H(+). Its pathway is cofactor biosynthesis; coenzyme A biosynthesis; CoA from (R)-pantothenate: step 1/5. The sequence is that of Pantothenate kinase from Vibrio vulnificus (strain YJ016).